The following is a 338-amino-acid chain: Glycerol-3-phosphate dehydrogenase [NAD(P)+] (338 aa).

Residues Ser12, Trp13, and Lys110 each contribute to the NADPH site. 3 residues coordinate sn-glycerol 3-phosphate: Lys110, Gly141, and Ser143. An NADPH-binding site is contributed by Ala145. Sn-glycerol 3-phosphate is bound by residues Lys196, Asp249, Ser259, Arg260, and Asn261. Catalysis depends on Lys196, which acts as the Proton acceptor. Residue Arg260 coordinates NADPH. Residues Val284 and Glu286 each contribute to the NADPH site.

Belongs to the NAD-dependent glycerol-3-phosphate dehydrogenase family.

The protein localises to the cytoplasm. The enzyme catalyses sn-glycerol 3-phosphate + NAD(+) = dihydroxyacetone phosphate + NADH + H(+). The catalysed reaction is sn-glycerol 3-phosphate + NADP(+) = dihydroxyacetone phosphate + NADPH + H(+). The protein operates within membrane lipid metabolism; glycerophospholipid metabolism. Catalyzes the reduction of the glycolytic intermediate dihydroxyacetone phosphate (DHAP) to sn-glycerol 3-phosphate (G3P), the key precursor for phospholipid synthesis. This Pediococcus pentosaceus (strain ATCC 25745 / CCUG 21536 / LMG 10740 / 183-1w) protein is Glycerol-3-phosphate dehydrogenase [NAD(P)+].